Here is a 130-residue protein sequence, read N- to C-terminus: Small ribosomal subunit protein uS11 (130 aa).

This sequence belongs to the universal ribosomal protein uS11 family. Part of the 30S ribosomal subunit. Interacts with proteins S7 and S18. Binds to IF-3.

In terms of biological role, located on the platform of the 30S subunit, it bridges several disparate RNA helices of the 16S rRNA. Forms part of the Shine-Dalgarno cleft in the 70S ribosome. In Synechococcus sp. (strain WH7803), this protein is Small ribosomal subunit protein uS11.